A 325-amino-acid chain; its full sequence is Natural cytotoxicity triggering receptor 1 (325 aa).

The signal sequence occupies residues 1–16; it reads MLPTLTALLCLGLCLS. The Extracellular segment spans residues 17–255; sequence QRINTEKETL…SAFWDHTTQN (239 aa). Ig-like domains are found at residues 34–118 and 129–211; these read KPSI…LVVT and YPRP…LLIT. A disulfide bond links C49 and C98. N139 carries an N-linked (GlcNAc...) asparagine glycan. A disulfide bridge links C144 with C190. N-linked (GlcNAc...) asparagine glycans are attached at residues N216 and N238. A helical transmembrane segment spans residues 256–273; sequence LIRIGLACIILITLVWLL. Residues 274–325 lie on the Cytoplasmic side of the membrane; that stretch reads TEDWLSKRKDHEEANRLTNWECRRRWRMQHYFEEEQRNAISMMELKATPGAL.

The protein belongs to the natural cytotoxicity receptor (NCR) family. As to quaternary structure, interacts with CD3Z and FCER1G. In terms of tissue distribution, selectively expressed by NK cells.

The protein localises to the cell membrane. In terms of biological role, cytotoxicity-activating receptor that may contribute to the increased efficiency of activated natural killer (NK) cells to mediate tumor cell lysis. This is Natural cytotoxicity triggering receptor 1 (Ncr1) from Mus musculus (Mouse).